The following is a 164-amino-acid chain: Protein-export protein SecB (164 aa).

This sequence belongs to the SecB family. In terms of assembly, homotetramer, a dimer of dimers. One homotetramer interacts with 1 SecA dimer.

It localises to the cytoplasm. One of the proteins required for the normal export of preproteins out of the cell cytoplasm. It is a molecular chaperone that binds to a subset of precursor proteins, maintaining them in a translocation-competent state. It also specifically binds to its receptor SecA. The sequence is that of Protein-export protein SecB from Orientia tsutsugamushi (strain Ikeda) (Rickettsia tsutsugamushi).